The sequence spans 365 residues: 3-isopropylmalate dehydrogenase (365 aa).

Residue 78–91 (GPKWDTLPAEERPE) coordinates NAD(+). Arg-99, Arg-109, Arg-138, and Asp-227 together coordinate substrate. 3 residues coordinate Mg(2+): Asp-227, Asp-251, and Asp-255. 285 to 297 (GSAPDIAGKNIAN) provides a ligand contact to NAD(+).

The protein belongs to the isocitrate and isopropylmalate dehydrogenases family. LeuB type 1 subfamily. As to quaternary structure, homodimer. Mg(2+) is required as a cofactor. It depends on Mn(2+) as a cofactor.

The protein resides in the cytoplasm. The enzyme catalyses (2R,3S)-3-isopropylmalate + NAD(+) = 4-methyl-2-oxopentanoate + CO2 + NADH. Its pathway is amino-acid biosynthesis; L-leucine biosynthesis; L-leucine from 3-methyl-2-oxobutanoate: step 3/4. Catalyzes the oxidation of 3-carboxy-2-hydroxy-4-methylpentanoate (3-isopropylmalate) to 3-carboxy-4-methyl-2-oxopentanoate. The product decarboxylates to 4-methyl-2 oxopentanoate. The sequence is that of 3-isopropylmalate dehydrogenase from Syntrophotalea carbinolica (strain DSM 2380 / NBRC 103641 / GraBd1) (Pelobacter carbinolicus).